The chain runs to 441 residues: C4-dicarboxylate transport protein (441 aa).

Over 1–30 (MIIEHSAEVRGKTPLYRHLYVQVLAAIAAG) the chain is Cytoplasmic. Residues 31–49 (ILLGHFYPDIGTELKPLGD) traverse the membrane as a helical segment. The Periplasmic segment spans residues 50 to 68 (AFIRLVKMIIAPVIFLTVA). The helical transmembrane segment at 69-87 (TGIAGMTDLAKVGRVAGKA) threads the bilayer. At 88-99 (MIYFLAFSTLAL) the chain is on the cytoplasmic side. The helical transmembrane segment at 100–118 (VVGLVVANVVQPGAGMHID) threads the bilayer. The Periplasmic portion of the chain corresponds to 119–149 (PASLDAKAVATYAEKAHEQSITGFLMNIIPT). A helical membrane pass occupies residues 150 to 168 (TLVGAFAEGDILQVLFISV). Over 169-171 (LFG) the chain is Cytoplasmic. A helical membrane pass occupies residues 172 to 190 (ISLAIVGKKAEPVVDFLQA). The Periplasmic segment spans residues 191-209 (LTLPIFRLVAILMKAAPIG). A helical transmembrane segment spans residues 210–228 (AFGAMAFTIGKYGIASIAN). Over 229-241 (LAMLIGTFYLTSF) the chain is Cytoplasmic. Residues 242-260 (LFVFIVLGAVARYNGFSIL) traverse the membrane as a helical segment. The Periplasmic segment spans residues 261–281 (SLIRYIKEELLLVLGTSSSEA). The chain crosses the membrane as a helical span at residues 282–300 (ALPGLMNKMEKAGCKRSVV). The Cytoplasmic segment spans residues 301–320 (GLVIPTGYSFNLDGTNIYMT). Residues 321 to 339 (LAALFIAQATDTPLSYGDQ) traverse the membrane as a helical segment. Topologically, residues 340-350 (ILLLLVAMLSS) are periplasmic. Residues 351–369 (KGAAGITGAGFITLAATLS) form a helical membrane-spanning segment. At 370–378 (VVPSVPVAG) the chain is on the cytoplasmic side. The chain crosses the membrane as a helical span at residues 379–398 (MALILGIDRFMSECRALTNF). The Periplasmic segment spans residues 399 to 405 (VGNAVAT). Residues 406 to 424 (IVVAKWEGELDQAQLSAAL) form a helical membrane-spanning segment. Residues 425 to 441 (GGEASVEAIPAVVQPAE) lie on the Cytoplasmic side of the membrane.

This sequence belongs to the dicarboxylate/amino acid:cation symporter (DAACS) (TC 2.A.23) family.

It localises to the cell inner membrane. In terms of biological role, responsible for the transport of dicarboxylates such as succinate, fumarate, and malate from the periplasm across the inner membrane. This transport system plays an important role in the energy supply of rhizobium-legume symbionts. The chain is C4-dicarboxylate transport protein (dctA) from Rhizobium meliloti (strain 1021) (Ensifer meliloti).